Here is a 358-residue protein sequence, read N- to C-terminus: ATP synthase gamma chain, chloroplastic (358 aa).

A chloroplast-targeting transit peptide spans 1-35 (MAAMLASKQGAFMGRSSFAPAPKGVASRGSLQVVA). Cysteine 123 is a catalytic residue. A disulfide bridge connects residues cysteine 233 and cysteine 239.

Belongs to the ATPase gamma chain family. As to quaternary structure, F-type ATPases have 2 components, F(1) - the catalytic core - and F(0) - the membrane proton channel. F(1) has five subunits: alpha(3), beta(3), gamma(1), delta(1), epsilon(1). F(0) has four main subunits: a(1), b(1), b'(1) and c(10-14). The alpha and beta chains form an alternating ring which encloses part of the gamma chain. F(1) is attached to F(0) by a central stalk formed by the gamma and epsilon chains, while a peripheral stalk is formed by the delta, b and b' chains.

It localises to the plastid. The protein localises to the chloroplast thylakoid membrane. F(1)F(0) ATP synthase produces ATP from ADP in the presence of a proton or sodium gradient. F-type ATPases consist of two structural domains, F(1) containing the extramembraneous catalytic core and F(0) containing the membrane proton channel, linked together by a central stalk and a peripheral stalk. During catalysis, ATP synthesis in the catalytic domain of F(1) is coupled via a rotary mechanism of the central stalk subunits to proton translocation. Functionally, produces ATP from ADP in the presence of a proton gradient across the membrane. The gamma chain is believed to be important in regulating ATPase activity and the flow of protons through the CF(0) complex. The chain is ATP synthase gamma chain, chloroplastic from Chlamydomonas reinhardtii (Chlamydomonas smithii).